The primary structure comprises 274 residues: Diaminopimelate epimerase (274 aa).

Substrate-binding residues include Asn-11 and Asn-76. The Proton donor role is filled by Cys-85. Substrate-binding positions include 86 to 87 (GN), Asn-157, Asn-189, and 207 to 208 (ER). Catalysis depends on Cys-216, which acts as the Proton acceptor. Substrate is bound at residue 217–218 (GT).

The protein belongs to the diaminopimelate epimerase family. Homodimer.

It is found in the cytoplasm. The enzyme catalyses (2S,6S)-2,6-diaminopimelate = meso-2,6-diaminopimelate. The protein operates within amino-acid biosynthesis; L-lysine biosynthesis via DAP pathway; DL-2,6-diaminopimelate from LL-2,6-diaminopimelate: step 1/1. Functionally, catalyzes the stereoinversion of LL-2,6-diaminopimelate (L,L-DAP) to meso-diaminopimelate (meso-DAP), a precursor of L-lysine and an essential component of the bacterial peptidoglycan. The polypeptide is Diaminopimelate epimerase (Thermobifida fusca (strain YX)).